Here is a 325-residue protein sequence, read N- to C-terminus: Ribosomal RNA small subunit methyltransferase C (325 aa).

The protein belongs to the methyltransferase superfamily. RsmC family. As to quaternary structure, monomer.

Its subcellular location is the cytoplasm. It catalyses the reaction guanosine(1207) in 16S rRNA + S-adenosyl-L-methionine = N(2)-methylguanosine(1207) in 16S rRNA + S-adenosyl-L-homocysteine + H(+). In terms of biological role, specifically methylates the guanine in position 1207 of 16S rRNA in the 30S particle. This Alcanivorax borkumensis (strain ATCC 700651 / DSM 11573 / NCIMB 13689 / SK2) protein is Ribosomal RNA small subunit methyltransferase C.